A 427-amino-acid polypeptide reads, in one-letter code: tRNA pseudouridine synthase Pus10 (427 aa).

The active-site Nucleophile is the Asp-240. Substrate-binding residues include Tyr-306 and Tyr-378.

This sequence belongs to the pseudouridine synthase Pus10 family.

It carries out the reaction uridine(54) in tRNA = pseudouridine(54) in tRNA. The catalysed reaction is uridine(55) in tRNA = pseudouridine(55) in tRNA. Functionally, responsible for synthesis of pseudouridine from uracil-54 and uracil-55 in the psi GC loop of transfer RNAs. This chain is tRNA pseudouridine synthase Pus10, found in Halorubrum lacusprofundi (strain ATCC 49239 / DSM 5036 / JCM 8891 / ACAM 34).